The following is a 186-amino-acid chain: MDKEHLKKNLQEKMEKALKVLDHELKGLRTGRASVNLLDSVTVEAYGSKMPLSQVASLSTPDARTINVQVWDKSMVSSVEKGITIANLGLTPATDGQLIRLPIPALTEERRTELVKLAHKYGEDTKISLRNIRRDGNEALKKLEKDNVIAKDEHHSLSEQVQKLTDDYSSKVDSVIKQKEQEIMTV.

It belongs to the RRF family.

Its subcellular location is the cytoplasm. In terms of biological role, responsible for the release of ribosomes from messenger RNA at the termination of protein biosynthesis. May increase the efficiency of translation by recycling ribosomes from one round of translation to another. The polypeptide is Ribosome-recycling factor (Rickettsia peacockii (strain Rustic)).